We begin with the raw amino-acid sequence, 388 residues long: NADPH-dependent butanol dehydrogenase (388 aa).

It belongs to the iron-containing alcohol dehydrogenase family.

In terms of biological role, this enzyme has activity using butanol and ethanol as substrates. This is NADPH-dependent butanol dehydrogenase (adh1) from Clostridium saccharobutylicum.